The following is a 224-amino-acid chain: Uridylate kinase (224 aa).

Residue 6 to 10 (KVTGK) participates in ATP binding. UMP is bound at residue G41. ATP is bound by residues G42 and R46. UMP contacts are provided by residues D63 and 111–117 (FQPGQST). ATP contacts are provided by T137, F143, and D146.

This sequence belongs to the UMP kinase family. Homohexamer.

It localises to the cytoplasm. The enzyme catalyses UMP + ATP = UDP + ADP. Its pathway is pyrimidine metabolism; CTP biosynthesis via de novo pathway; UDP from UMP (UMPK route): step 1/1. Its activity is regulated as follows. Inhibited by UTP. Its function is as follows. Catalyzes the reversible phosphorylation of UMP to UDP. This Metallosphaera sedula (strain ATCC 51363 / DSM 5348 / JCM 9185 / NBRC 15509 / TH2) protein is Uridylate kinase.